An 82-amino-acid polypeptide reads, in one-letter code: MAADRAQNLQDTFLNHVRKTKTPLTIFLVNGVKLQGIVTWFDNFCLLLRRDGHSQLVYKHAISTIMPGAPIQLFEGGEDAPA.

Positions 11 to 71 constitute a Sm domain; that stretch reads DTFLNHVRKT…ISTIMPGAPI (61 aa).

The protein belongs to the Hfq family. As to quaternary structure, homohexamer.

RNA chaperone that binds small regulatory RNA (sRNAs) and mRNAs to facilitate mRNA translational regulation in response to envelope stress, environmental stress and changes in metabolite concentrations. Also binds with high specificity to tRNAs. The sequence is that of RNA-binding protein Hfq from Rhodopseudomonas palustris (strain BisA53).